We begin with the raw amino-acid sequence, 399 residues long: Nicotinate phosphoribosyltransferase (399 aa).

Phosphohistidine; by autocatalysis is present on histidine 217.

Belongs to the NAPRTase family. Post-translationally, transiently phosphorylated on a His residue during the reaction cycle. Phosphorylation strongly increases the affinity for substrates and increases the rate of nicotinate D-ribonucleotide production. Dephosphorylation regenerates the low-affinity form of the enzyme, leading to product release.

It catalyses the reaction nicotinate + 5-phospho-alpha-D-ribose 1-diphosphate + ATP + H2O = nicotinate beta-D-ribonucleotide + ADP + phosphate + diphosphate. It participates in cofactor biosynthesis; NAD(+) biosynthesis; nicotinate D-ribonucleotide from nicotinate: step 1/1. Functionally, catalyzes the synthesis of beta-nicotinate D-ribonucleotide from nicotinate and 5-phospho-D-ribose 1-phosphate at the expense of ATP. The protein is Nicotinate phosphoribosyltransferase of Burkholderia orbicola (strain MC0-3).